Here is a 236-residue protein sequence, read N- to C-terminus: MEIFPAIDLKEGQAVRLSKGLMQSAKIYSSEPSELAKRFEDYGAKWLHVVDLDGAFAGEAINFKTIEKIVKATNLKVQVGGGIRDEERIKRYLDLGVSRVILGSVALRDPEFTAKMAGIYRVVVGIDAKDGYVAVQGWGEVSNIKAVDLAKKFADVGVEAVICTDINKDGMLGGVNVDFSLQIARSSKLETIASGGVSDINDILALKATKEIAGVIVGKAYYEGRLDLKDAFKQVG.

Asp8 functions as the Proton acceptor in the catalytic mechanism. Catalysis depends on Asp127, which acts as the Proton donor.

Belongs to the HisA/HisF family.

It is found in the cytoplasm. The enzyme catalyses 1-(5-phospho-beta-D-ribosyl)-5-[(5-phospho-beta-D-ribosylamino)methylideneamino]imidazole-4-carboxamide = 5-[(5-phospho-1-deoxy-D-ribulos-1-ylimino)methylamino]-1-(5-phospho-beta-D-ribosyl)imidazole-4-carboxamide. The protein operates within amino-acid biosynthesis; L-histidine biosynthesis; L-histidine from 5-phospho-alpha-D-ribose 1-diphosphate: step 4/9. The chain is 1-(5-phosphoribosyl)-5-[(5-phosphoribosylamino)methylideneamino] imidazole-4-carboxamide isomerase from Campylobacter concisus (strain 13826).